Here is a 574-residue protein sequence, read N- to C-terminus: E3 ubiquitin-protein ligase NEURL1 (574 aa).

Residues 1 to 18 (MGNNFSSVSSLQRGNPSR) are compositionally biased toward polar residues. Residues 1-53 (MGNNFSSVSSLQRGNPSRASRGHPQNLKDSIGGSFPVPSHRCHHKQKHCPPTL) form a disordered region. Residue Gly-2 is the site of N-myristoyl glycine attachment. NHR domains follow at residues 61 to 217 (TPLL…QLLD) and 292 to 447 (GDLR…RILG). An RING-type zinc finger spans residues 520-560 (ECTICYEHAVDTVIYTCGHMCLCYSCGLRLKKALHACCPIC).

Interacts with CPEB3 (via N-terminal domain); the interaction increases CPEB3 ubiquitination. Interacts with DLL1. Post-translationally, myristoylation is a determinant of membrane targeting. As to expression, expressed in CA1 pyramidal neurons (at protein level). Expressed throughout the adult forebrain, including the cerebral cortex, amygdala, striatum, and CA1 area of the hippocampus. Expressed in sensory neurons of the olfactory epithelium, the vomeronasal organ, mammary gland and skeletal muscle.

The protein localises to the cytoplasm. It localises to the perinuclear region. It is found in the cell membrane. The protein resides in the perikaryon. Its subcellular location is the cell projection. The protein localises to the dendrite. It localises to the postsynaptic density. The catalysed reaction is S-ubiquitinyl-[E2 ubiquitin-conjugating enzyme]-L-cysteine + [acceptor protein]-L-lysine = [E2 ubiquitin-conjugating enzyme]-L-cysteine + N(6)-ubiquitinyl-[acceptor protein]-L-lysine.. The protein operates within protein modification; protein ubiquitination. Its function is as follows. Plays a role in hippocampal-dependent synaptic plasticity, learning and memory. Involved in the formation of spines and functional synaptic contacts by modulating the translational activity of the cytoplasmic polyadenylation element-binding protein CPEB3. Promotes ubiquitination of CPEB3, and hence induces CPEB3-dependent mRNA translation activation of glutamate receptor GRIA1 and GRIA2. Can function as an E3 ubiquitin-protein ligase to activate monoubiquitination of JAG1 (in vitro), thereby regulating the Notch pathway. Acts as a tumor suppressor; inhibits malignant cell transformation of medulloblastoma (MB) cells by inhibiting the Notch signaling pathway. This is E3 ubiquitin-protein ligase NEURL1 (Neurl1) from Mus musculus (Mouse).